The chain runs to 183 residues: ATP synthase subunit delta (183 aa).

Belongs to the ATPase delta chain family. F-type ATPases have 2 components, F(1) - the catalytic core - and F(0) - the membrane proton channel. F(1) has five subunits: alpha(3), beta(3), gamma(1), delta(1), epsilon(1). F(0) has three main subunits: a(1), b(2) and c(10-14). The alpha and beta chains form an alternating ring which encloses part of the gamma chain. F(1) is attached to F(0) by a central stalk formed by the gamma and epsilon chains, while a peripheral stalk is formed by the delta and b chains.

It localises to the cell inner membrane. F(1)F(0) ATP synthase produces ATP from ADP in the presence of a proton or sodium gradient. F-type ATPases consist of two structural domains, F(1) containing the extramembraneous catalytic core and F(0) containing the membrane proton channel, linked together by a central stalk and a peripheral stalk. During catalysis, ATP synthesis in the catalytic domain of F(1) is coupled via a rotary mechanism of the central stalk subunits to proton translocation. Functionally, this protein is part of the stalk that links CF(0) to CF(1). It either transmits conformational changes from CF(0) to CF(1) or is implicated in proton conduction. This is ATP synthase subunit delta from Desulfatibacillum aliphaticivorans.